Here is a 450-residue protein sequence, read N- to C-terminus: FAD-linked oxidoreductase penO (450 aa).

An FAD-binding PCMH-type domain is found at Pro32 to Ala203.

Belongs to the oxygen-dependent FAD-linked oxidoreductase family. It depends on FAD as a cofactor.

It participates in secondary metabolite biosynthesis. In terms of biological role, FAD-linked oxidoreductase; part of the gene cluster that mediates the biosynthesis of the indole diterpenes penitrems. The geranylgeranyl diphosphate (GGPP) synthase penG catalyzes the first step in penitrem biosynthesis via conversion of farnesyl pyrophosphate and isopentyl pyrophosphate into geranylgeranyl pyrophosphate (GGPP). Condensation of indole-3-glycerol phosphate with GGPP by the prenyl transferase penC then forms 3-geranylgeranylindole (3-GGI). Epoxidation by the FAD-dependent monooxygenase penM leads to a epoxidized-GGI that is substrate of the terpene cyclase penB for cyclization to yield paspaline. Paspaline is subsequently converted to 13-desoxypaxilline by the cytochrome P450 monooxygenase penP, the latter being then converted to paxilline by the cytochrome P450 monooxygenase penQ. Paxilline is converted to beta-paxitriol via C-10 ketoreduction by the short-chain dehydrogenase PC-15 which can be monoprenylated at the C-20 by the indole diterpene prenyltransferase penD. A two-step elimination (acetylation and elimination) process performed by the O-acetyltransferase PC-16 and the P.simplicissimum ptmI-ortholog not yet identified in P.crustosum, leads to the production of the prenylated form of penijanthine. The FAD-linked oxidoreductase ptmO then converts the prenylated form of penijanthine into PC-M5 which is in turn transformed into PC-M4 by the aromatic dimethylallyltransferase PC-22. A series of oxidation steps involving 4 cytochrome P450 monooxygenases (PC-21, PC-05, PC-23, PC-20) and a FAD-dependent monooxygenase (PC-14) are required for the transformation of PC-M4 to penitrems A and E. Synthesis of these final products is proposed to proceed via penitrems D and C (PC-21, PC-05, PC-14) and penitrems B and F (PC-21, PC-05, PC-14, PC-23). This Penicillium crustosum (Blue mold fungus) protein is FAD-linked oxidoreductase penO.